We begin with the raw amino-acid sequence, 139 residues long: Low molecular weight protein-tyrosine-phosphatase PtpB (139 aa).

Cys7 serves as the catalytic Nucleophile. Arg13 is an active-site residue. Asp111 acts as the Proton donor in catalysis.

This sequence belongs to the low molecular weight phosphotyrosine protein phosphatase family.

It catalyses the reaction O-phospho-L-tyrosyl-[protein] + H2O = L-tyrosyl-[protein] + phosphate. Dephosphorylates the phosphotyrosine-containing proteins. This chain is Low molecular weight protein-tyrosine-phosphatase PtpB (ptpB), found in Staphylococcus epidermidis (strain ATCC 35984 / DSM 28319 / BCRC 17069 / CCUG 31568 / BM 3577 / RP62A).